The sequence spans 416 residues: 2-amino-3-ketobutyrate coenzyme A ligase, mitochondrial (416 aa).

The transit peptide at 1-18 (MWASFMWHGALSPGRRAH) directs the protein to the mitochondrion. Position 42 is an N6-acetyllysine; alternate (lysine 42). Lysine 42 carries the post-translational modification N6-succinyllysine; alternate. 131-132 (CF) contributes to the pyridoxal 5'-phosphate binding site. Position 156 (histidine 156) interacts with substrate. The residue at position 184 (lysine 184) is an N6-acetyllysine; alternate. The residue at position 184 (lysine 184) is an N6-succinyllysine; alternate. Pyridoxal 5'-phosphate contacts are provided by residues serine 203, 259–262 (TLGK), and 292–293 (SN). Lysine 262 carries the N6-(pyridoxal phosphate)lysine modification. N6-succinyllysine occurs at positions 323 and 365. An N6-acetyllysine; alternate modification is found at lysine 380. Lysine 380 bears the N6-succinyllysine; alternate mark. Arginine 386 provides a ligand contact to substrate.

It belongs to the class-II pyridoxal-phosphate-dependent aminotransferase family. Requires pyridoxal 5'-phosphate as cofactor.

The protein resides in the mitochondrion. It is found in the nucleus. It catalyses the reaction glycine + acetyl-CoA = (2S)-2-amino-3-oxobutanoate + CoA. It functions in the pathway amino-acid degradation; L-threonine degradation via oxydo-reductase pathway; glycine from L-threonine: step 2/2. Its function is as follows. Pyridoxal phosphate (PLP) dependent enzyme, which catalyzes the cleavage of 2-amino-3-oxobutanoate to glycine and acetyl-CoA. Catalyzes the second reaction step on the main metabolic degradation pathway for L-threonine. The polypeptide is 2-amino-3-ketobutyrate coenzyme A ligase, mitochondrial (Gcat) (Mus musculus (Mouse)).